Reading from the N-terminus, the 366-residue chain is MLPLWARGGKPIVIPLPQKRHITLPALPILLLLLGTGFLLHSLFFPPPPPHPPGKYTSSPFLVKPSDFLAPPPPDRPSYIPEPLQPKKKGMLVPDAVHYVYGLKPVPEGKTGEELPYYAYLAMRSALINLKPKAIYFHYEHLPTGPWWDLIRPHLTLIKTQVPESIYGRPLKHFAHKADVLRLLAMKYSGGIYLDIDIYVTKPFDDLLYYPTTLGMEASPDSRRSALDPEGLCNAIIISQPNSLFIDRWLASYETFDGGIWAQHSVVKPWQLAREHPTEVQVLSERAFFWPMWHGDEIKKTHETNHHDFKASGQYAYHAWESLAMGYLSKLSPQSIRENENSFNKMVRPFIGPKDDETYKKWKRGH.

The Extracellular portion of the chain corresponds to 1–24 (MLPLWARGGKPIVIPLPQKRHITL). Residues 25–45 (PALPILLLLLGTGFLLHSLFF) form a helical membrane-spanning segment. Residues 46-366 (PPPPPHPPGK…ETYKKWKRGH (321 aa)) are Cytoplasmic-facing.

Belongs to the glycosyltransferase 32 family.

Its subcellular location is the cell membrane. Its function is as follows. Plays a role in the localization of glycogen rosettes to the plasma membrane. Required for correct cell wall organization and may facilitate the connection between beta-1,3-glucan and beta-1,6-glucan in the cell wall. The polypeptide is Glucan organizing enzyme 1 (Cryptococcus neoformans var. grubii serotype A (strain H99 / ATCC 208821 / CBS 10515 / FGSC 9487) (Filobasidiella neoformans var. grubii)).